The following is a 260-amino-acid chain: MSGRLIGKVALVSGGARGMGASHVRAMVAEGAKVVFGDILDEEGKAVAAELADAARYVHLDVTQPAQWTAAVDTAVTAFGGLHVLVNNAGILNIGTIEDYALTEWQRILDVNLTGVFLGIRAVVKPMKEAGRGSIINISSIEGLAGTVACHGYTATKFAVRGLTKSTALELGPGGIRVNSIHPGLVKTPMTDWVPEDIFQTALGRAAEPVEVSNLVVYLASDESSYSTGAEFVVDGGTVAGLAHNDFGAVEVSSQPEWVT.

NAD(+)-binding residues include Arg17, Met19, Asp38, Asp61, Val62, Asn88, Tyr153, Lys157, Val186, Thr188, and Thr191. Tyr153 serves as the catalytic Proton acceptor.

Belongs to the short-chain dehydrogenases/reductases (SDR) family. In terms of assembly, homotetramer.

The catalysed reaction is androstan-3alpha,17beta-diol + NAD(+) = 17beta-hydroxyandrostanone + NADH + H(+). It functions in the pathway lipid metabolism; steroid degradation. Functionally, probably involved in steroid metabolism. In Mycobacterium tuberculosis (strain CDC 1551 / Oshkosh), this protein is 3-alpha-(or 20-beta)-hydroxysteroid dehydrogenase (fabG3).